Consider the following 443-residue polypeptide: Tubulin beta-1/beta-2 chain (443 aa).

GTP is bound by residues Gln-11, Glu-69, Ser-138, Gly-142, Thr-143, Gly-144, Asn-204, and Asn-226. Glu-69 provides a ligand contact to Mg(2+). The segment at 424-443 is disordered; the sequence is QYQDASAEEEGEFEGEEEEA. Over residues 429-443 the composition is skewed to acidic residues; the sequence is SAEEEGEFEGEEEEA.

It belongs to the tubulin family. As to quaternary structure, dimer of alpha and beta chains. A typical microtubule is a hollow water-filled tube with an outer diameter of 25 nm and an inner diameter of 15 nM. Alpha-beta heterodimers associate head-to-tail to form protofilaments running lengthwise along the microtubule wall with the beta-tubulin subunit facing the microtubule plus end conferring a structural polarity. Microtubules usually have 13 protofilaments but different protofilament numbers can be found in some organisms and specialized cells. Requires Mg(2+) as cofactor.

Its subcellular location is the cytoplasm. It is found in the cytoskeleton. Functionally, tubulin is the major constituent of microtubules, a cylinder consisting of laterally associated linear protofilaments composed of alpha- and beta-tubulin heterodimers. Microtubules grow by the addition of GTP-tubulin dimers to the microtubule end, where a stabilizing cap forms. Below the cap, tubulin dimers are in GDP-bound state, owing to GTPase activity of alpha-tubulin. This Chlamydomonas reinhardtii (Chlamydomonas smithii) protein is Tubulin beta-1/beta-2 chain (TUBB1).